Here is a 298-residue protein sequence, read N- to C-terminus: DDRGK domain-containing protein 1 (298 aa).

The Lumenal segment spans residues 1 to 2 (ME). The chain crosses the membrane as a helical span at residues 3-23 (EIFALIVSMILIVAVIPLFFW). Residues 24–298 (KRRRDARSRE…ISGMEEISVS (275 aa)) are Cytoplasmic-facing. The segment at 31–155 (SREEVAEPPQ…EEEKARQAKE (125 aa)) is disordered. Residues 101–155 (KRQEREAQRQAEEATRESRNTKQDWYAEMRRKKDEEREAEELKLEEEEKARQAKE) show a composition bias toward basic and acidic residues.

It belongs to the DDRGK1 family.

The protein localises to the endoplasmic reticulum membrane. Substrate adapter for ufmylation, the covalent attachment of the ubiquitin-like modifier UFM1 to substrate proteins. The chain is DDRGK domain-containing protein 1 from Arabidopsis thaliana (Mouse-ear cress).